A 392-amino-acid chain; its full sequence is ESX-1 secretion-associated protein EspA (392 aa).

The segment at 302–392 (TRQALRPRAD…GQKVLVRNVV (91 aa)) is disordered. The segment covering 334 to 344 (QGMGGPVGMGG) has biased composition (gly residues).

As to quaternary structure, homodimer; disulfide-linked.

The protein resides in the secreted. Its function is as follows. Required for secretion of EsxA (ESAT-6) and EsxB (CFP-10) and for virulence. The chain is ESX-1 secretion-associated protein EspA from Mycobacterium tuberculosis (strain CDC 1551 / Oshkosh).